The following is a 511-amino-acid chain: Maturase K (511 aa).

Belongs to the intron maturase 2 family. MatK subfamily.

It localises to the plastid. Its subcellular location is the chloroplast. In terms of biological role, usually encoded in the trnK tRNA gene intron. Probably assists in splicing its own and other chloroplast group II introns. This chain is Maturase K, found in Nardus stricta (Mat-grass).